Here is a 928-residue protein sequence, read N- to C-terminus: Isoleucine--tRNA ligase (928 aa).

Positions Pro57–His67 match the 'HIGH' region motif. Glu552 lines the L-isoleucyl-5'-AMP pocket. The short motif at Lys593–Ser597 is the 'KMSKS' region element. Lys596 is a binding site for ATP. Residues Cys887, Cys890, Cys907, and Cys910 each coordinate Zn(2+).

This sequence belongs to the class-I aminoacyl-tRNA synthetase family. IleS type 1 subfamily. In terms of assembly, monomer. It depends on Zn(2+) as a cofactor.

It localises to the cytoplasm. It catalyses the reaction tRNA(Ile) + L-isoleucine + ATP = L-isoleucyl-tRNA(Ile) + AMP + diphosphate. Catalyzes the attachment of isoleucine to tRNA(Ile). As IleRS can inadvertently accommodate and process structurally similar amino acids such as valine, to avoid such errors it has two additional distinct tRNA(Ile)-dependent editing activities. One activity is designated as 'pretransfer' editing and involves the hydrolysis of activated Val-AMP. The other activity is designated 'posttransfer' editing and involves deacylation of mischarged Val-tRNA(Ile). The chain is Isoleucine--tRNA ligase from Latilactobacillus sakei subsp. sakei (strain 23K) (Lactobacillus sakei subsp. sakei).